The chain runs to 273 residues: Oxidized low-density lipoprotein receptor 1 (273 aa).

Residues 1-22 (MTFDDLKIQTVKDQPDEKSNGK) are disordered. Residues 1-36 (MTFDDLKIQTVKDQPDEKSNGKKAKGLQFLYSPWWC) lie on the Cytoplasmic side of the membrane. S-palmitoyl cysteine attachment occurs at residues Cys-36 and Cys-46. A helical; Signal-anchor for type II membrane protein transmembrane segment spans residues 37-57 (LAAATLGVLCLGLVVTIMVLG). Residues 58-150 (MQLSQVSDLL…SAPCPQDWIW (93 aa)) form a neck region. The Extracellular portion of the chain corresponds to 58–273 (MQLSQVSDLL…CQKKANLRAQ (216 aa)). A coiled-coil region spans residues 64-123 (SDLLTQEQANLTHQKKKLEGQISARQQAEEASQESENELKEMIETLARKLNEKSKEQMEL). An N-linked (GlcNAc...) asparagine glycan is attached at Asn-73. Residue Asn-139 is glycosylated (N-linked (GlcNAc...) (complex) asparagine). Cystine bridges form between Cys-144–Cys-155, Cys-172–Cys-264, and Cys-243–Cys-256. The region spanning 151–265 (HGENCYLFSS…CILAAFSICQ (115 aa)) is the C-type lectin domain.

Homodimer; disulfide-linked. May form a hexamer composed of 3 homodimers. Interacts with HSP70. As to quaternary structure, (Microbial infection) Binds to the head and beginning of the coiled stalk of N.meningitidis adhesin A (nadA) variant 3; binding can be abrogated by monoclonal antibodies against the specific regions of NadA. Binding occurs in protein microarrays, in solution and when LOX-1 is expressed on the cell surface. The intrachain disulfide-bonds prevent N-glycosylation at some sites. Post-translationally, N-glycosylated. As to expression, expressed at high level in endothelial cells and vascular-rich organs such as placenta, lung, liver and brain, aortic intima, bone marrow, spinal cord and substantia nigra. Also expressed at the surface of dendritic cells. Widely expressed at intermediate and low level.

The protein resides in the cell membrane. The protein localises to the membrane raft. Its subcellular location is the secreted. Receptor that mediates the recognition, internalization and degradation of oxidatively modified low density lipoprotein (oxLDL) by vascular endothelial cells. OxLDL is a marker of atherosclerosis that induces vascular endothelial cell activation and dysfunction, resulting in pro-inflammatory responses, pro-oxidative conditions and apoptosis. Its association with oxLDL induces the activation of NF-kappa-B through an increased production of intracellular reactive oxygen and a variety of pro-atherogenic cellular responses including a reduction of nitric oxide (NO) release, monocyte adhesion and apoptosis. In addition to binding oxLDL, it acts as a receptor for the HSP70 protein involved in antigen cross-presentation to naive T-cells in dendritic cells, thereby participating in cell-mediated antigen cross-presentation. Also involved in inflammatory process, by acting as a leukocyte-adhesion molecule at the vascular interface in endotoxin-induced inflammation. Also acts as a receptor for advanced glycation end (AGE) products, activated platelets, monocytes, apoptotic cells and both Gram-negative and Gram-positive bacteria. In terms of biological role, (Microbial infection) May serve as a receptor for adhesin A variant 3 (nadA) of N.meningitidis. The chain is Oxidized low-density lipoprotein receptor 1 (OLR1) from Homo sapiens (Human).